A 189-amino-acid polypeptide reads, in one-letter code: Effector protein NleF (189 aa).

Positions 186-189 (LQCG) are interaction with host caspases.

In terms of assembly, monomer. Interacts (via C-terminus) with human CASP4, CASP8 and CASP9.

It is found in the secreted. The protein resides in the host cytoplasm. Its function is as follows. Effector protein that alters host cell physiology and promotes bacterial survival in host tissues. Inhibits the catalytic activity of human CASP4, CASP8 and CASP9, and thereby inhibits apoptosis of infected host cells. The sequence is that of Effector protein NleF (nleF) from Escherichia coli O157:H7.